A 418-amino-acid polypeptide reads, in one-letter code: Serine hydroxymethyltransferase (418 aa).

Residues Leu121 and 125 to 127 each bind (6S)-5,6,7,8-tetrahydrofolate; that span reads GHL. Lys230 bears the N6-(pyridoxal phosphate)lysine mark. (6S)-5,6,7,8-tetrahydrofolate is bound by residues Glu246 and 355-357; that span reads SPF.

Belongs to the SHMT family. In terms of assembly, homodimer. Pyridoxal 5'-phosphate serves as cofactor.

The protein localises to the cytoplasm. The catalysed reaction is (6R)-5,10-methylene-5,6,7,8-tetrahydrofolate + glycine + H2O = (6S)-5,6,7,8-tetrahydrofolate + L-serine. It functions in the pathway one-carbon metabolism; tetrahydrofolate interconversion. Its pathway is amino-acid biosynthesis; glycine biosynthesis; glycine from L-serine: step 1/1. Functionally, catalyzes the reversible interconversion of serine and glycine with tetrahydrofolate (THF) serving as the one-carbon carrier. This reaction serves as the major source of one-carbon groups required for the biosynthesis of purines, thymidylate, methionine, and other important biomolecules. Also exhibits THF-independent aldolase activity toward beta-hydroxyamino acids, producing glycine and aldehydes, via a retro-aldol mechanism. This is Serine hydroxymethyltransferase from Streptococcus pneumoniae serotype 19F (strain G54).